Consider the following 446-residue polypeptide: MSLFALGLNHKSAPVNIREQIVFAPDAVTAALQHLRAHTTAREAAILSTCNRTELYVRMDDRAPEMLGEWLARYHRLDPEWLRDYLYLHEGAGAVRHLMRVSAGLDSLVLGEPQILGQAKIAYQGAIDAGTMGRVLDRLFQHAFSVAKQVRTDTGIGANPVSVAFAAVTLARQIFDDFQNRTALLIGAGETIELVARHLREQGLKNLIVANRNLERARQLVELEGGEAIPLSEIPTRLPEADVLVASTASPLPILGKGTVERAVRKRRHRPMFMLDLAVPRDIEPEAGNLDDVYLYTVDDLREVIAENRRSREEAAHQAEEIVQRQVDQFLSWRRAQQAVASICDFRERGHAHARELLQRANRRLRCGEPPERVLAWLSHTLTNRLLHAPTVGLREAAEAGDRERIELARTLLQIENANEDTRESVDKEQTGTTQGAARGDQRSTG.

Residues 49–52 (TCNR), S107, 112–114 (EPQ), and Q118 each bind substrate. C50 functions as the Nucleophile in the catalytic mechanism. 187–192 (GAGETI) contacts NADP(+). Residues 417 to 446 (NANEDTRESVDKEQTGTTQGAARGDQRSTG) form a disordered region. Basic and acidic residues predominate over residues 420–430 (EDTRESVDKEQ).

It belongs to the glutamyl-tRNA reductase family. In terms of assembly, homodimer.

It catalyses the reaction (S)-4-amino-5-oxopentanoate + tRNA(Glu) + NADP(+) = L-glutamyl-tRNA(Glu) + NADPH + H(+). Its pathway is porphyrin-containing compound metabolism; protoporphyrin-IX biosynthesis; 5-aminolevulinate from L-glutamyl-tRNA(Glu): step 1/2. Catalyzes the NADPH-dependent reduction of glutamyl-tRNA(Glu) to glutamate 1-semialdehyde (GSA). This is Glutamyl-tRNA reductase from Alkalilimnicola ehrlichii (strain ATCC BAA-1101 / DSM 17681 / MLHE-1).